Reading from the N-terminus, the 107-residue chain is Quaternary ammonium compound-resistance protein QacG (107 aa).

The next 4 helical transmembrane spans lie at 1–21, 26–46, 57–77, and 84–104; these read MHYL…SFLK, FTKL…FYFL, ITYA…SVIV, and LISI…NVFG.

This sequence belongs to the drug/metabolite transporter (DMT) superfamily. Small multidrug resistance (SMR) (TC 2.A.7.1) family.

The protein resides in the cell membrane. In terms of biological role, multidrug exporter. Is implicated for the resistance to bacteriocidal quaternary ammonium compounds. This is Quaternary ammonium compound-resistance protein QacG (qacG) from Staphylococcus sp. (strain ST94).